A 609-amino-acid chain; its full sequence is Threonine--tRNA ligase (609 aa).

Residues 215-506 (DHRIIGNEMK…LIEHTAGELP (292 aa)) form a catalytic region. Zn(2+)-binding residues include Cys307, His358, and His483.

This sequence belongs to the class-II aminoacyl-tRNA synthetase family. In terms of assembly, homodimer. Zn(2+) is required as a cofactor.

The protein localises to the cytoplasm. It catalyses the reaction tRNA(Thr) + L-threonine + ATP = L-threonyl-tRNA(Thr) + AMP + diphosphate + H(+). In terms of biological role, catalyzes the attachment of threonine to tRNA(Thr) in a two-step reaction: L-threonine is first activated by ATP to form Thr-AMP and then transferred to the acceptor end of tRNA(Thr). Also edits incorrectly charged L-seryl-tRNA(Thr). The chain is Threonine--tRNA ligase from Campylobacter hominis (strain ATCC BAA-381 / DSM 21671 / CCUG 45161 / LMG 19568 / NCTC 13146 / CH001A).